The sequence spans 321 residues: 4-hydroxy-2-oxoglutarate aldolase, mitochondrial (321 aa).

A mitochondrion-targeting transit peptide spans 1–23; the sequence is MLGPQIWASMRQGLSRGLSRNVK. A substrate-binding site is contributed by 71-72; sequence ST. Lys190 functions as the Schiff-base intermediate with substrate in the catalytic mechanism. The substrate site is built by Ser192 and Gly216.

It belongs to the DapA family. As to quaternary structure, homotetramer.

It is found in the mitochondrion. It carries out the reaction (4S)-4-hydroxy-2-oxoglutarate = glyoxylate + pyruvate. It catalyses the reaction (4R)-4-hydroxy-2-oxoglutarate = glyoxylate + pyruvate. Its activity is regulated as follows. Inhibited by divalent cations. Its function is as follows. Catalyzes the final step in the metabolic pathway of hydroxyproline. This Mus musculus (Mouse) protein is 4-hydroxy-2-oxoglutarate aldolase, mitochondrial (Hoga1).